Reading from the N-terminus, the 375-residue chain is Alanine racemase (375 aa).

Lysine 40 (proton acceptor; specific for D-alanine) is an active-site residue. Lysine 40 carries the post-translational modification N6-(pyridoxal phosphate)lysine. A substrate-binding site is contributed by arginine 140. The active-site Proton acceptor; specific for L-alanine is the tyrosine 268. Methionine 315 lines the substrate pocket.

Belongs to the alanine racemase family. Pyridoxal 5'-phosphate serves as cofactor.

The enzyme catalyses L-alanine = D-alanine. The protein operates within amino-acid biosynthesis; D-alanine biosynthesis; D-alanine from L-alanine: step 1/1. In terms of biological role, catalyzes the interconversion of L-alanine and D-alanine. May also act on other amino acids. The sequence is that of Alanine racemase (alr) from Limosilactobacillus reuteri (strain DSM 20016) (Lactobacillus reuteri).